A 778-amino-acid chain; its full sequence is Endonuclease MutS2 (778 aa).

328–335 contributes to the ATP binding site; sequence GPNTGGKT. Residues 702-777 enclose the Smr domain; that stretch reads LDLRGKRYEE…GSGATIVTFK (76 aa).

Belongs to the DNA mismatch repair MutS family. MutS2 subfamily. Homodimer. Binds to stalled ribosomes, contacting rRNA.

Endonuclease that is involved in the suppression of homologous recombination and thus may have a key role in the control of bacterial genetic diversity. Its function is as follows. Acts as a ribosome collision sensor, splitting the ribosome into its 2 subunits. Detects stalled/collided 70S ribosomes which it binds and splits by an ATP-hydrolysis driven conformational change. Acts upstream of the ribosome quality control system (RQC), a ribosome-associated complex that mediates the extraction of incompletely synthesized nascent chains from stalled ribosomes and their subsequent degradation. Probably generates substrates for RQC. The polypeptide is Endonuclease MutS2 (Streptococcus pneumoniae (strain Taiwan19F-14)).